We begin with the raw amino-acid sequence, 1097 residues long: DNA-directed RNA polymerase subunit beta (1097 aa).

The tract at residues 1073 to 1097 (DVNPRRSTPSRPTYESLGVADYDED) is disordered.

The protein belongs to the RNA polymerase beta chain family. In cyanobacteria the RNAP catalytic core is composed of 2 alpha, 1 beta, 1 beta', 1 gamma and 1 omega subunit. When a sigma factor is associated with the core the holoenzyme is formed, which can initiate transcription.

It carries out the reaction RNA(n) + a ribonucleoside 5'-triphosphate = RNA(n+1) + diphosphate. Functionally, DNA-dependent RNA polymerase catalyzes the transcription of DNA into RNA using the four ribonucleoside triphosphates as substrates. The sequence is that of DNA-directed RNA polymerase subunit beta from Synechococcus sp. (strain RCC307).